The following is a 137-amino-acid chain: MAKQAKAGAARRPQRGRRRERKNVPRGQAHVQATFNNTIVTITDPAGNVVCWSSAGASGFKGSRKSTPYAAQVTAEQAARKAMDNGMRVVEVYVKGPGAGRESAVRALQATGLSVIAITDVTPIPHNGCRPPKRRRV.

The span at 1–11 (MAKQAKAGAAR) shows a compositional bias: low complexity. Residues 1 to 32 (MAKQAKAGAARRPQRGRRRERKNVPRGQAHVQ) are disordered. Residues 12-21 (RPQRGRRRER) are compositionally biased toward basic residues.

This sequence belongs to the universal ribosomal protein uS11 family. In terms of assembly, part of the 30S ribosomal subunit. Interacts with proteins S7 and S18. Binds to IF-3.

In terms of biological role, located on the platform of the 30S subunit, it bridges several disparate RNA helices of the 16S rRNA. Forms part of the Shine-Dalgarno cleft in the 70S ribosome. This chain is Small ribosomal subunit protein uS11, found in Herpetosiphon aurantiacus (strain ATCC 23779 / DSM 785 / 114-95).